The chain runs to 235 residues: Ribosomal RNA small subunit methyltransferase G (235 aa).

Residues Gly-98, Met-103, 149–150 (VE), and Arg-164 each bind S-adenosyl-L-methionine.

It belongs to the methyltransferase superfamily. RNA methyltransferase RsmG family.

The protein localises to the cytoplasm. It carries out the reaction guanosine(527) in 16S rRNA + S-adenosyl-L-methionine = N(7)-methylguanosine(527) in 16S rRNA + S-adenosyl-L-homocysteine. Specifically methylates the N7 position of guanine in position 527 of 16S rRNA. In Cupriavidus pinatubonensis (strain JMP 134 / LMG 1197) (Cupriavidus necator (strain JMP 134)), this protein is Ribosomal RNA small subunit methyltransferase G.